The following is a 261-amino-acid chain: RING finger and CHY zinc finger domain-containing protein 1 (261 aa).

The segment at Leu-13–Thr-80 adopts a CHY-type zinc-finger fold. Zn(2+) contacts are provided by Cys-20, His-22, Cys-33, Cys-34, Cys-40, Cys-43, His-44, His-50, Cys-62, Cys-65, Cys-75, Cys-78, Cys-87, Cys-90, His-101, Cys-102, Cys-105, Cys-108, His-118, Cys-119, Cys-122, Cys-125, His-134, and Cys-136. The CTCHY-type zinc-finger motif lies at Phe-82 to Asn-144. The segment at Cys-145–Ser-189 adopts an RING-type zinc-finger fold.

As to quaternary structure, monomer and homodimer. Interacts with AR, MDM2, KAT5, PLAG1, PLAGL2, COPE, UBE2D2 and GORAB/NTKLBP1. In terms of processing, subject to ubiquitination and proteasomal degradation. Interaction with PLAGL2 or KAT5 enhances protein stability. As to expression, detected in testis, liver, kidney and heart.

It localises to the nucleus. The protein resides in the nucleus speckle. Its subcellular location is the cytoplasm. It carries out the reaction S-ubiquitinyl-[E2 ubiquitin-conjugating enzyme]-L-cysteine + [acceptor protein]-L-lysine = [E2 ubiquitin-conjugating enzyme]-L-cysteine + N(6)-ubiquitinyl-[acceptor protein]-L-lysine.. It participates in protein modification; protein ubiquitination. Functionally, E3 ubiquitin-protein ligase that mediates ubiquitination of target proteins, including p53/TP53, TP73, HDAC1 and CDKN1B. Mediates ubiquitination and degradation of p53/TP53; preferentially acts on tetrameric p53/TP53. Catalyzes monoubiquitinates the translesion DNA polymerase POLH. Involved in the ribosome-associated quality control (RQC) pathway, which mediates the extraction of incompletely synthesized nascent chains from stalled ribosomes: RCHY1 acts downstream of NEMF and recognizes CAT tails associated with stalled nascent chains, leading to their ubiquitination and degradation. The sequence is that of RING finger and CHY zinc finger domain-containing protein 1 (Rchy1) from Mus musculus (Mouse).